Here is a 427-residue protein sequence, read N- to C-terminus: Trigger factor (427 aa).

In terms of domain architecture, PPIase FKBP-type spans 163 to 248 (GDTVVIDFVG…VHEVKAKEVP (86 aa)).

The protein belongs to the FKBP-type PPIase family. Tig subfamily.

It localises to the cytoplasm. It carries out the reaction [protein]-peptidylproline (omega=180) = [protein]-peptidylproline (omega=0). Involved in protein export. Acts as a chaperone by maintaining the newly synthesized protein in an open conformation. Functions as a peptidyl-prolyl cis-trans isomerase. The chain is Trigger factor from Streptococcus equi subsp. equi (strain 4047).